A 943-amino-acid polypeptide reads, in one-letter code: Leucine--tRNA ligase (943 aa).

Residues 36 to 46 (PYPSGSMHVGH) carry the 'HIGH' region motif. A 'KMSKS' region motif is present at residues 623–627 (KMSSS). A disordered region spans residues 910–943 (ASEVVIHTDPEEAPGPEDRKAGARPLRPGIWLEE). Residues 915–930 (IHTDPEEAPGPEDRKA) show a composition bias toward basic and acidic residues.

This sequence belongs to the class-I aminoacyl-tRNA synthetase family.

It is found in the cytoplasm. It carries out the reaction tRNA(Leu) + L-leucine + ATP = L-leucyl-tRNA(Leu) + AMP + diphosphate. In Methanopyrus kandleri (strain AV19 / DSM 6324 / JCM 9639 / NBRC 100938), this protein is Leucine--tRNA ligase.